The primary structure comprises 130 residues: Small ribosomal subunit protein uS9 (130 aa).

It belongs to the universal ribosomal protein uS9 family.

This chain is Small ribosomal subunit protein uS9, found in Pasteurella multocida (strain Pm70).